Consider the following 89-residue polypeptide: Phosphocarrier protein HPr (89 aa).

In terms of domain architecture, HPr spans 1–88; it reads MLEHELTVTN…ELFENRFNED (88 aa). The active-site Pros-phosphohistidine intermediate is the histidine 15. At serine 46 the chain carries Phosphoserine; by HPrK/P.

This sequence belongs to the HPr family.

The protein localises to the cytoplasm. Phosphorylation on Ser-46 inhibits the phosphoryl transfer from enzyme I to HPr. Functionally, general (non sugar-specific) component of the phosphoenolpyruvate-dependent sugar phosphotransferase system (sugar PTS). This major carbohydrate active-transport system catalyzes the phosphorylation of incoming sugar substrates concomitantly with their translocation across the cell membrane. The phosphoryl group from phosphoenolpyruvate (PEP) is transferred to the phosphoryl carrier protein HPr by enzyme I. Phospho-HPr then transfers it to the PTS EIIA domain. The sequence is that of Phosphocarrier protein HPr (ptsH) from Xylella fastidiosa (strain Temecula1 / ATCC 700964).